The sequence spans 99 residues: Cytochrome c-555 (99 aa).

Positions 23, 26, 27, and 73 each coordinate heme c.

Binds 1 heme c group covalently per subunit.

This Prosthecochloris aestuarii protein is Cytochrome c-555.